A 432-amino-acid chain; its full sequence is Adenylosuccinate synthetase (432 aa).

GTP contacts are provided by residues 13–19 (GDEGKGK) and 41–43 (GHT). The Proton acceptor role is filled by Asp14. Residues Asp14 and Gly41 each coordinate Mg(2+). IMP-binding positions include 14-17 (DEGK), 39-42 (NAGH), Thr130, Arg144, Gln225, Thr240, and Arg304. His42 acts as the Proton donor in catalysis. 300 to 306 (ATTGRRR) contributes to the substrate binding site. GTP-binding positions include Arg306, 332 to 334 (KLD), and 415 to 417 (STG).

The protein belongs to the adenylosuccinate synthetase family. Homodimer. Requires Mg(2+) as cofactor.

Its subcellular location is the cytoplasm. The enzyme catalyses IMP + L-aspartate + GTP = N(6)-(1,2-dicarboxyethyl)-AMP + GDP + phosphate + 2 H(+). It functions in the pathway purine metabolism; AMP biosynthesis via de novo pathway; AMP from IMP: step 1/2. In terms of biological role, plays an important role in the de novo pathway of purine nucleotide biosynthesis. Catalyzes the first committed step in the biosynthesis of AMP from IMP. This is Adenylosuccinate synthetase from Enterobacter sp. (strain 638).